Reading from the N-terminus, the 1262-residue chain is Collagen alpha-1(III) chain (1262 aa).

An N-terminal signal peptide occupies residues 1-23 (MMSFVQKVSLFILAVFQPSVILA). Residues 24–150 (QQDALGGCTH…PSISGGSFSP (127 aa)) constitute a propeptide, N-terminal propeptide. Residues 29–88 (GGCTHLGQEYADRDVWKPEPCQICVCDSGSVLCDDIICDDQELDCPNPEIPLGECCPVCP) form the VWFC domain. 2 disordered regions span residues 95–143 (TELP…CPSI) and 160–1000 (GSVG…GGVA). Low complexity predominate over residues 102–118 (GPKGDPGSPGSPGRTGA). The span at 119–134 (PGPPGQPGSPGAPGPP) shows a compositional bias: pro residues. Residues 145 to 164 (GGSFSPQYDSYDVKAGSVGM) form a nonhelical region (N-terminal) region. The triple-helical region stretch occupies residues 165–994 (GYPPQPISGF…PGPSGPPGPC (830 aa)). The span at 167–190 (PPQPISGFPGPPGPSGPPGPPGHA) shows a compositional bias: pro residues. Over residues 192–201 (PPGSNGYQGP) the composition is skewed to low complexity. A compositionally biased stretch (pro residues) spans 202-216 (PGEPGQPGPSGPPGP). Positions 228–240 (KDGEPGRPGRNGD) are enriched in basic and acidic residues. The span at 253–264 (PGMPGMPGMKGA) shows a compositional bias: low complexity. 5-hydroxylysine is present on K262. The span at 265 to 274 (RGFDGKDGAK) shows a compositional bias: basic and acidic residues. 2 stretches are compositionally biased toward low complexity: residues 276 to 295 (DSGAPGPKGEAGQPGANGSP) and 339 to 376 (TAGFPGSPGFKGEAGPPGPAGASGNPGERGEPGPQGQA). At K283 the chain carries 5-hydroxylysine. The span at 389–414 (GSPGGKGEMGPSGIPGGPGPPGGRGL) shows a compositional bias: gly residues. Composition is skewed to low complexity over residues 534 to 549 (MRGLPGIPGSPGSDGK) and 631 to 640 (PGPSGSPGLQ). A compositionally biased stretch (gly residues) spans 641 to 650 (GLPGGPGPAG). Residues 672 to 684 (PKGENGIPGERGP) are compositionally biased toward low complexity. Residues 692–701 (GARGGPGPAG) are compositionally biased toward gly residues. 4 stretches are compositionally biased toward low complexity: residues 723–738 (LQGMPGERGASGSPGP), 781–790 (TGPAGAPGPA), 802–817 (QGLPGPAGFPGAPGQN), and 828–838 (PPGLRGEAGPP). Residue K859 is modified to 5-hydroxylysine. The span at 863-872 (GSPGGPGAAG) shows a compositional bias: gly residues. Residues 895–904 (PGVPGPPGHP) show a composition bias toward pro residues. Over residues 927–940 (PQGAIGSPGASGAR) the composition is skewed to low complexity. A compositionally biased stretch (pro residues) spans 976-993 (AGPPGQPGLPGPSGPPGP). The segment at 995-1003 (CGGGVASLG) is nonhelical region (C-terminal). A propeptide spans 1018–1262 (DEPKENEINL…GVDVGPVCFL (245 aa)) (C-terminal propeptide). One can recognise a Fibrillar collagen NC1 domain in the interval 1028–1262 (GEIMSSMKSI…GVDVGPVCFL (235 aa)). Cystine bridges form between C1058–C1090, C1098–C1260, and C1168–C1213. D1076, N1078, Q1079, C1081, and D1084 together coordinate Ca(2+). A glycan (N-linked (GlcNAc...) asparagine) is linked at N1163.

This sequence belongs to the fibrillar collagen family. As to quaternary structure, trimers of identical alpha 1(III) chains. The chains are linked to each other by interchain disulfide bonds. Trimers are also cross-linked via hydroxylysines. Post-translationally, prolines at the third position of the tripeptide repeating unit (G-X-Y) are hydroxylated in some or all of the chains.

The protein localises to the secreted. It localises to the extracellular space. It is found in the extracellular matrix. Collagen type III occurs in most soft connective tissues along with type I collagen. The sequence is that of Collagen alpha-1(III) chain (COL3A1) from Gallus gallus (Chicken).